A 313-amino-acid chain; its full sequence is DNA-directed RNA polymerase subunit alpha (313 aa).

The segment at 1–229 (MNSSNLLMEC…NLFKSIGEQK (229 aa)) is alpha N-terminal domain (alpha-NTD). Residues 243 to 313 (IKPIDPYTHI…LKNKLGIVLK (71 aa)) are alpha C-terminal domain (alpha-CTD).

The protein belongs to the RNA polymerase alpha chain family. In plastids the minimal PEP RNA polymerase catalytic core is composed of four subunits: alpha, beta, beta', and beta''. When a (nuclear-encoded) sigma factor is associated with the core the holoenzyme is formed, which can initiate transcription.

It is found in the plastid. The protein localises to the chloroplast. It catalyses the reaction RNA(n) + a ribonucleoside 5'-triphosphate = RNA(n+1) + diphosphate. In terms of biological role, DNA-dependent RNA polymerase catalyzes the transcription of DNA into RNA using the four ribonucleoside triphosphates as substrates. The chain is DNA-directed RNA polymerase subunit alpha from Thalassiosira pseudonana (Marine diatom).